The chain runs to 217 residues: dITP/XTP pyrophosphatase (217 aa).

Substrate is bound at residue Ser7–Lys12. Asp72 functions as the Proton acceptor in the catalytic mechanism. Asp72 contacts Mg(2+). Substrate contacts are provided by residues Ser73, Phe163 to Asp166, Lys195, and His200 to Arg201.

Belongs to the HAM1 NTPase family. In terms of assembly, homodimer. Mg(2+) is required as a cofactor.

The catalysed reaction is XTP + H2O = XMP + diphosphate + H(+). It catalyses the reaction dITP + H2O = dIMP + diphosphate + H(+). It carries out the reaction ITP + H2O = IMP + diphosphate + H(+). Pyrophosphatase that catalyzes the hydrolysis of nucleoside triphosphates to their monophosphate derivatives, with a high preference for the non-canonical purine nucleotides XTP (xanthosine triphosphate), dITP (deoxyinosine triphosphate) and ITP. Seems to function as a house-cleaning enzyme that removes non-canonical purine nucleotides from the nucleotide pool, thus preventing their incorporation into DNA/RNA and avoiding chromosomal lesions. The protein is dITP/XTP pyrophosphatase of Corynebacterium jeikeium (strain K411).